We begin with the raw amino-acid sequence, 256 residues long: Thiazole synthase (256 aa).

Catalysis depends on K95, which acts as the Schiff-base intermediate with DXP. 1-deoxy-D-xylulose 5-phosphate is bound by residues G156, 182–183 (AG), and 204–205 (NT).

It belongs to the ThiG family. Homotetramer. Forms heterodimers with either ThiH or ThiS.

The protein localises to the cytoplasm. The enzyme catalyses [ThiS sulfur-carrier protein]-C-terminal-Gly-aminoethanethioate + 2-iminoacetate + 1-deoxy-D-xylulose 5-phosphate = [ThiS sulfur-carrier protein]-C-terminal Gly-Gly + 2-[(2R,5Z)-2-carboxy-4-methylthiazol-5(2H)-ylidene]ethyl phosphate + 2 H2O + H(+). The protein operates within cofactor biosynthesis; thiamine diphosphate biosynthesis. Functionally, catalyzes the rearrangement of 1-deoxy-D-xylulose 5-phosphate (DXP) to produce the thiazole phosphate moiety of thiamine. Sulfur is provided by the thiocarboxylate moiety of the carrier protein ThiS. In vitro, sulfur can be provided by H(2)S. In Salmonella paratyphi B (strain ATCC BAA-1250 / SPB7), this protein is Thiazole synthase.